We begin with the raw amino-acid sequence, 438 residues long: MNKKVKIIGAGLAGCEAAYFLANNNIQVELYEVKTLIKNEVQKTNNFAELVCFNTFRSQSLLNAAGILKAEMRRLNSLVIKIADGCKIDGDDALAVDREDFSKKLTEVIKNHPNITIIEQNVSHIDDENDLTLIATGPLTTNELKEDIQRLIGKQKLFFIDASASIITKDSIDFNKVYYSGRHKLGKYICCPLNEQEFNEFADNLINAEQVQLKEFEKSIFFKGCQPIEQLAKTSKKLLLKGPMSPNNLLDQNNHQPYSVVQLRQDDAKDSLYNMVGFQTNLKWPEQKRVFQTIPGLEKAKIVRYGVMHKNYYINSPKILNFKLQVMRKKNVFFAGQITGVEGYIESASSGIWAAINILAFINNKKIKPLPNTTILGALTNYITNSKIYSLKPMKCNLAILEQENKYQSNDKFYSFNNSKNSLEEYIKQLNQILGTSI.

Residue 9–14 (GAGLAG) coordinates FAD.

The protein belongs to the MnmG family. TrmFO subfamily. FAD is required as a cofactor.

Its subcellular location is the cytoplasm. The catalysed reaction is uridine(54) in tRNA + (6R)-5,10-methylene-5,6,7,8-tetrahydrofolate + NADH + H(+) = 5-methyluridine(54) in tRNA + (6S)-5,6,7,8-tetrahydrofolate + NAD(+). The enzyme catalyses uridine(54) in tRNA + (6R)-5,10-methylene-5,6,7,8-tetrahydrofolate + NADPH + H(+) = 5-methyluridine(54) in tRNA + (6S)-5,6,7,8-tetrahydrofolate + NADP(+). Functionally, catalyzes the folate-dependent formation of 5-methyl-uridine at position 54 (M-5-U54) in all tRNAs. The chain is Methylenetetrahydrofolate--tRNA-(uracil-5-)-methyltransferase TrmFO 2 from Mycoplasma mycoides subsp. mycoides SC (strain CCUG 32753 / NCTC 10114 / PG1).